The sequence spans 299 residues: Tyrosine recombinase XerC (299 aa).

Positions 1 to 85 (MKRQLEAYCA…AVRGLYRYLN (85 aa)) constitute a Core-binding (CB) domain. The Tyr recombinase domain maps to 106–285 (RLPKVLDTDR…DFQHLAAVYD (180 aa)). Active-site residues include arginine 146, lysine 170, histidine 237, arginine 240, and histidine 263. Tyrosine 272 functions as the O-(3'-phospho-DNA)-tyrosine intermediate in the catalytic mechanism.

This sequence belongs to the 'phage' integrase family. XerC subfamily. In terms of assembly, forms a cyclic heterotetrameric complex composed of two molecules of XerC and two molecules of XerD.

Its subcellular location is the cytoplasm. Functionally, site-specific tyrosine recombinase, which acts by catalyzing the cutting and rejoining of the recombining DNA molecules. The XerC-XerD complex is essential to convert dimers of the bacterial chromosome into monomers to permit their segregation at cell division. It also contributes to the segregational stability of plasmids. The sequence is that of Tyrosine recombinase XerC from Pseudomonas putida (strain ATCC 700007 / DSM 6899 / JCM 31910 / BCRC 17059 / LMG 24140 / F1).